A 204-amino-acid polypeptide reads, in one-letter code: Holliday junction branch migration complex subunit RuvA (204 aa).

Residues 1–64 (MIGRLQGKLI…EDAHLLFGFS (64 aa)) are domain I. Residues 65 to 143 (TKTDRTLFRE…GLRQPDFFVE (79 aa)) form a domain II region. The interval 144 to 155 (SKHITVPDIVSA) is flexible linker. The interval 156–204 (EKETPNDEAVAALVALGYKPPEAAKMVKKVANGDLTSEQLIREALKAAL) is domain III.

This sequence belongs to the RuvA family. In terms of assembly, homotetramer. Forms an RuvA(8)-RuvB(12)-Holliday junction (HJ) complex. HJ DNA is sandwiched between 2 RuvA tetramers; dsDNA enters through RuvA and exits via RuvB. An RuvB hexamer assembles on each DNA strand where it exits the tetramer. Each RuvB hexamer is contacted by two RuvA subunits (via domain III) on 2 adjacent RuvB subunits; this complex drives branch migration. In the full resolvosome a probable DNA-RuvA(4)-RuvB(12)-RuvC(2) complex forms which resolves the HJ.

The protein localises to the cytoplasm. Functionally, the RuvA-RuvB-RuvC complex processes Holliday junction (HJ) DNA during genetic recombination and DNA repair, while the RuvA-RuvB complex plays an important role in the rescue of blocked DNA replication forks via replication fork reversal (RFR). RuvA specifically binds to HJ cruciform DNA, conferring on it an open structure. The RuvB hexamer acts as an ATP-dependent pump, pulling dsDNA into and through the RuvAB complex. HJ branch migration allows RuvC to scan DNA until it finds its consensus sequence, where it cleaves and resolves the cruciform DNA. The polypeptide is Holliday junction branch migration complex subunit RuvA (Actinobacillus succinogenes (strain ATCC 55618 / DSM 22257 / CCUG 43843 / 130Z)).